The sequence spans 459 residues: Elongation factor 1-alpha (459 aa).

G2 carries the post-translational modification N,N,N-trimethylglycine. The residue at position 3 (K3) is an N6,N6-dimethyllysine; alternate. K3 bears the N6-methyllysine; alternate mark. A tr-type G domain is found at 5-240 (KLHVNVVVIG…DAIEPPTRPT (236 aa)). Residues 14 to 21 (GHVDSGKS) form a G1 region. 14 to 21 (GHVDSGKS) is a binding site for GTP. N6-methyllysine is present on K30. Positions 70–74 (GITID) are G2. K79 carries the N6,N6,N6-trimethyllysine modification. The segment at 91–94 (DAPG) is G3. Residues 91–95 (DAPGH) and 153–156 (NKMD) contribute to the GTP site. Positions 153-156 (NKMD) are G4. The G5 stretch occupies residues 192–194 (SGW). K316 carries the post-translational modification N6,N6-dimethyllysine; alternate. K316 carries the post-translational modification N6-methyllysine; alternate. N6-methyllysine is present on K390.

Belongs to the TRAFAC class translation factor GTPase superfamily. Classic translation factor GTPase family. EF-Tu/EF-1A subfamily.

It localises to the cytoplasm. This protein promotes the GTP-dependent binding of aminoacyl-tRNA to the A-site of ribosomes during protein biosynthesis. The polypeptide is Elongation factor 1-alpha (TEF1) (Cryptococcus neoformans var. neoformans serotype D (strain B-3501A) (Filobasidiella neoformans)).